The sequence spans 203 residues: GTP-binding protein YPTM2 (203 aa).

GTP is bound by residues 15–23 (GDSGVGKSC), 33–40 (YLDSYIST), 63–67 (DTAGQ), 121–124 (NKSD), and 151–153 (SAK). The short motif at 37 to 45 (YISTIGVDF) is the Effector region element. 2 S-geranylgeranyl cysteine lipidation sites follow: Cys200 and Cys201.

Belongs to the small GTPase superfamily. Rab family. As to expression, its expression is weak in stems, higher in roots, leaves and coleoptiles, but highest in flowers.

The protein localises to the cell membrane. Protein transport. Probably involved in vesicular traffic. This chain is GTP-binding protein YPTM2 (YPTM2), found in Zea mays (Maize).